The primary structure comprises 203 residues: Protein GrpE (203 aa).

Residues 1–10 (MSNESIKAEQ) are compositionally biased toward basic and acidic residues. Positions 1 to 20 (MSNESIKAEQDLIQEGVESE) are disordered.

This sequence belongs to the GrpE family. Homodimer.

It localises to the cytoplasm. In terms of biological role, participates actively in the response to hyperosmotic and heat shock by preventing the aggregation of stress-denatured proteins, in association with DnaK and GrpE. It is the nucleotide exchange factor for DnaK and may function as a thermosensor. Unfolded proteins bind initially to DnaJ; upon interaction with the DnaJ-bound protein, DnaK hydrolyzes its bound ATP, resulting in the formation of a stable complex. GrpE releases ADP from DnaK; ATP binding to DnaK triggers the release of the substrate protein, thus completing the reaction cycle. Several rounds of ATP-dependent interactions between DnaJ, DnaK and GrpE are required for fully efficient folding. The sequence is that of Protein GrpE from Shewanella sp. (strain MR-7).